Consider the following 438-residue polypeptide: C4-dicarboxylate transport protein 1 (438 aa).

The next 8 helical transmembrane spans lie at 20-42 (LYVQ…PSVA), 57-77 (LIKM…IAHI), 90-112 (ALFY…GNLV), 160-179 (VLQV…ALGK), 192-214 (AHAV…FGAM), 229-251 (LIGL…LGLI), 324-346 (LFIA…LLVA), and 361-383 (FITL…AIVF).

Belongs to the dicarboxylate/amino acid:cation symporter (DAACS) (TC 2.A.23) family.

Its subcellular location is the cell inner membrane. In terms of biological role, responsible for the transport of dicarboxylates such as succinate, fumarate, and malate from the periplasm across the membrane. The polypeptide is C4-dicarboxylate transport protein 1 (Bradyrhizobium diazoefficiens (strain JCM 10833 / BCRC 13528 / IAM 13628 / NBRC 14792 / USDA 110)).